Reading from the N-terminus, the 301-residue chain is Homoserine O-acetyltransferase (301 aa).

Cys142 acts as the Acyl-thioester intermediate in catalysis. Positions 163 and 192 each coordinate substrate. His235 (proton acceptor) is an active-site residue. Glu237 is a catalytic residue. Substrate is bound at residue Arg249.

It belongs to the MetA family. As to quaternary structure, homodimer.

Its subcellular location is the cytoplasm. The enzyme catalyses L-homoserine + acetyl-CoA = O-acetyl-L-homoserine + CoA. Its pathway is amino-acid biosynthesis; L-methionine biosynthesis via de novo pathway; O-acetyl-L-homoserine from L-homoserine: step 1/1. Its function is as follows. Transfers an acetyl group from acetyl-CoA to L-homoserine, forming acetyl-L-homoserine. Utilizes a ping-pong kinetic mechanism in which the acetyl group of acetyl-CoA is initially transferred to the enzyme to form an acetyl-enzyme intermediate before subsequent transfer to homoserine to form the final product, O-acetylhomoserine. Cannot use succinyl-CoA as the acyl donor. The polypeptide is Homoserine O-acetyltransferase (Bacillus cereus (strain ATCC 10987 / NRS 248)).